We begin with the raw amino-acid sequence, 313 residues long: Dimethyladenosine transferase (313 aa).

S-adenosyl-L-methionine is bound by residues histidine 37, leucine 39, glycine 64, glutamate 85, aspartate 113, and asparagine 128.

Belongs to the class I-like SAM-binding methyltransferase superfamily. rRNA adenine N(6)-methyltransferase family. Part of the small subunit (SSU) processome, composed of more than 70 proteins and the RNA chaperone small nucleolar RNA (snoRNA) U3.

The protein resides in the nucleus. The protein localises to the nucleoplasm. It is found in the nucleolus. The enzyme catalyses adenosine(1779)/adenosine(1780) in 18S rRNA + 4 S-adenosyl-L-methionine = N(6)-dimethyladenosine(1779)/N(6)-dimethyladenosine(1780) in 18S rRNA + 4 S-adenosyl-L-homocysteine + 4 H(+). Its function is as follows. Specifically dimethylates two adjacent adenosines in the loop of a conserved hairpin near the 3'-end of 18S rRNA in the 40S particle. Involved in the pre-rRNA processing steps leading to small-subunit rRNA production independently of its RNA-modifying catalytic activity. Part of the small subunit (SSU) processome, first precursor of the small eukaryotic ribosomal subunit. During the assembly of the SSU processome in the nucleolus, many ribosome biogenesis factors, an RNA chaperone and ribosomal proteins associate with the nascent pre-rRNA and work in concert to generate RNA folding, modifications, rearrangements and cleavage as well as targeted degradation of pre-ribosomal RNA by the RNA exosome. The protein is Dimethyladenosine transferase (Dimt1) of Mus musculus (Mouse).